A 223-amino-acid chain; its full sequence is Nicotinamide/nicotinic acid mononucleotide adenylyltransferase 2 (223 aa).

NAD(+)-binding residues include S11 and F12. H19 contributes to the ATP binding site. NAD(+)-binding residues include W87, T90, G116, D118, L133, W134, and R153. Position 190-191 (190-191) interacts with ATP; that stretch reads TR.

It belongs to the eukaryotic NMN adenylyltransferase family. A divalent metal cation is required as a cofactor.

The enzyme catalyses beta-nicotinamide D-ribonucleotide + ATP + H(+) = diphosphate + NAD(+). It carries out the reaction nicotinate beta-D-ribonucleotide + ATP + H(+) = deamido-NAD(+) + diphosphate. It functions in the pathway cofactor biosynthesis; NAD(+) biosynthesis; deamido-NAD(+) from nicotinate D-ribonucleotide: step 1/1. Its pathway is cofactor biosynthesis; NAD(+) biosynthesis; NAD(+) from nicotinamide D-ribonucleotide: step 1/1. Its function is as follows. Catalyzes the formation of NAD(+) from nicotinamide mononucleotide (NMN) and ATP. Can also use the deamidated form; nicotinic acid mononucleotide (NaMN) as substrate. The polypeptide is Nicotinamide/nicotinic acid mononucleotide adenylyltransferase 2 (Caenorhabditis elegans).